The primary structure comprises 341 residues: MVGEMEVKERPRPSPDYLMQLLNEKKLMTSLPNLCGIFTHLERLLDEEINRVRKDMYNDSVNGLVDKHPLELPEPVGPIVHLQEKLFVPVKEYPDYNFVGRILGPRGLTAKQLEAETGCKIMVRGRSSMRDKKKEEQNRGKPNWEHLNEDLHVLITVEDTQTRAEIKMRRAVEEVKKLLVPAAEGEDNLKKMQLMELAILNGTYRDTNIKAPTLAFSLAAAAAAAQGPRLIAAPPGQVLPPATLRPPTPAGTPIMNIIRPTQMATVLPNGTPTLVPPTPDAGIIYTTPYDYPYALAPTSLLEYPIEHSGVLGAMATKVRRHDSRVHPYQRIVTADRAATGN.

One can recognise a KH domain in the interval 87-153; sequence FVPVKEYPDY…WEHLNEDLHV (67 aa). An SH3-binding motif is present at residues 276-279; it reads PPTP. Residues 324–330 carry the Nuclear localization signal motif; sequence RVHPYQR.

Belongs to the quaking family. In terms of assembly, homodimer; does not require RNA to homodimerize.

It localises to the cytoplasm. The protein resides in the nucleus. RNA reader protein, which recognizes and binds specific RNAs, thereby regulating RNA metabolic processes, such as pre-mRNA splicing, circular RNA (circRNA) formation, mRNA export, mRNA stability and/or translation. Involved in various cellular processes, such as mRNA storage into stress granules, apoptosis, interferon response, glial cell fate and development. Binds to the 5'-NACUAAY-N(1,20)-UAAY-3' RNA core sequence. Acts as a mRNA modification reader that specifically recognizes and binds mRNA transcripts modified by internal N(7)-methylguanine (m7G). Promotes the formation of circular RNAs (circRNAs): acts by binding to sites flanking circRNA-forming exons. CircRNAs are produced by back-splicing circularization of pre-mRNAs. Required to protect and promote stability of mRNAs which promotes oligodendrocyte differentiation. Acts as an important regulator of muscle development: required during early skeletal myofibril formation by regulating the accumulation of the muscle-specific tropomyosin-3 (tpm3) transcripts. The protein is Protein quaking-A of Danio rerio (Zebrafish).